The sequence spans 227 residues: Probable septum site-determining protein MinC (227 aa).

The protein belongs to the MinC family. Interacts with MinD and FtsZ.

Cell division inhibitor that blocks the formation of polar Z ring septums. Rapidly oscillates between the poles of the cell to destabilize FtsZ filaments that have formed before they mature into polar Z rings. Prevents FtsZ polymerization. The sequence is that of Probable septum site-determining protein MinC from Geobacillus kaustophilus (strain HTA426).